The chain runs to 256 residues: Ubiquinone/menaquinone biosynthesis C-methyltransferase UbiE (256 aa).

S-adenosyl-L-methionine is bound by residues threonine 79, aspartate 100, and aspartate 128–alanine 129.

It belongs to the class I-like SAM-binding methyltransferase superfamily. MenG/UbiE family.

The catalysed reaction is a 2-demethylmenaquinol + S-adenosyl-L-methionine = a menaquinol + S-adenosyl-L-homocysteine + H(+). It catalyses the reaction a 2-methoxy-6-(all-trans-polyprenyl)benzene-1,4-diol + S-adenosyl-L-methionine = a 5-methoxy-2-methyl-3-(all-trans-polyprenyl)benzene-1,4-diol + S-adenosyl-L-homocysteine + H(+). The protein operates within quinol/quinone metabolism; menaquinone biosynthesis; menaquinol from 1,4-dihydroxy-2-naphthoate: step 2/2. It participates in cofactor biosynthesis; ubiquinone biosynthesis. Functionally, methyltransferase required for the conversion of demethylmenaquinol (DMKH2) to menaquinol (MKH2) and the conversion of 2-polyprenyl-6-methoxy-1,4-benzoquinol (DDMQH2) to 2-polyprenyl-3-methyl-6-methoxy-1,4-benzoquinol (DMQH2). The sequence is that of Ubiquinone/menaquinone biosynthesis C-methyltransferase UbiE from Pseudomonas savastanoi pv. phaseolicola (strain 1448A / Race 6) (Pseudomonas syringae pv. phaseolicola (strain 1448A / Race 6)).